Consider the following 746-residue polypeptide: PAN2-PAN3 deadenylation complex subunit pan3 (746 aa).

The C3H1-type zinc finger occupies 7 to 35 (PKNQKQCKNIALHGYCRNSDKCEFSHELT). Residues 64–97 (QQQQQQQNSNGNGSNNTATSNNPIISPNSNIASP) are compositionally biased toward low complexity. 3 disordered regions span residues 64-100 (QQQQ…PLKK), 169-205 (DDQH…NMNN), and 219-275 (NASP…PSLQ). The span at 196 to 205 (NNGIDPNMNN) shows a compositional bias: polar residues. The segment covering 221-275 (SPQSYQQQFQQPNPSPQSSSQQQQQQQQQQQQAVYQQQQQQQPSSQPLAQNPSLQ) has biased composition (low complexity). The tract at residues 351–610 (DPNDPRIKNI…NIDEVVLMIS (260 aa)) is pseudokinase domain. ATP-binding positions include Arg-407, 457–464 (EFFPGSET), and 509–510 (SK). Positions 611–649 (GRLLQENNYLHTYTDDLETELSKEYENGRLFRLVTKLGF) form a coiled coil. Residues 650–746 (INERPLYDMD…SELVSQKSHI (97 aa)) are knob domain.

The protein belongs to the protein kinase superfamily. PAN3 family. Homodimer. Forms a heterotrimer with a catalytic subunit PAN2 to form the poly(A)-nuclease (PAN) deadenylation complex. Interacts (via PAM-2 motif) with poly(A)-binding protein (via PABC domain), conferring substrate specificity of the enzyme complex.

It is found in the cytoplasm. Its function is as follows. Regulatory subunit of the poly(A)-nuclease (PAN) deadenylation complex, one of two cytoplasmic mRNA deadenylases involved in mRNA turnover. PAN specifically shortens poly(A) tails of RNA and the activity is stimulated by poly(A)-binding protein (PABP). PAN deadenylation is followed by rapid degradation of the shortened mRNA tails by the CCR4-NOT complex. Deadenylated mRNAs are then degraded by two alternative mechanisms, namely exosome-mediated 3'-5' exonucleolytic degradation, or deadenylation-dependent mRNA decaping and subsequent 5'-3' exonucleolytic degradation by XRN1. PAN3 acts as a positive regulator for PAN activity, recruiting the catalytic subunit PAN2 to mRNA via its interaction with RNA and PABP. This Dictyostelium discoideum (Social amoeba) protein is PAN2-PAN3 deadenylation complex subunit pan3.